The following is a 124-amino-acid chain: Acidic phospholipase A2 BA1 (124 aa).

7 disulfides stabilise this stretch: cysteine 26–cysteine 116, cysteine 28–cysteine 44, cysteine 43–cysteine 95, cysteine 49–cysteine 124, cysteine 50–cysteine 88, cysteine 57–cysteine 81, and cysteine 75–cysteine 86. The Ca(2+) site is built by tyrosine 27, glycine 29, and glycine 31. Histidine 47 is an active-site residue. Aspartate 48 is a Ca(2+) binding site. Aspartate 89 is an active-site residue.

It belongs to the phospholipase A2 family. Group II subfamily. D49 sub-subfamily. Ca(2+) serves as cofactor. Expressed by the venom gland.

The protein localises to the secreted. The catalysed reaction is a 1,2-diacyl-sn-glycero-3-phosphocholine + H2O = a 1-acyl-sn-glycero-3-phosphocholine + a fatty acid + H(+). PLA2 catalyzes the calcium-dependent hydrolysis of the 2-acyl groups in 3-sn-phosphoglycerides. The protein is Acidic phospholipase A2 BA1 of Gloydius halys (Chinese water mocassin).